We begin with the raw amino-acid sequence, 155 residues long: Endoribonuclease YbeY (155 aa).

Zn(2+)-binding residues include His-120, His-124, and His-130.

The protein belongs to the endoribonuclease YbeY family. It depends on Zn(2+) as a cofactor.

Its subcellular location is the cytoplasm. Its function is as follows. Single strand-specific metallo-endoribonuclease involved in late-stage 70S ribosome quality control and in maturation of the 3' terminus of the 16S rRNA. This chain is Endoribonuclease YbeY, found in Staphylococcus epidermidis (strain ATCC 35984 / DSM 28319 / BCRC 17069 / CCUG 31568 / BM 3577 / RP62A).